The following is a 583-amino-acid chain: Membrane protein insertase YidC (583 aa).

The next 6 helical transmembrane spans lie at 5–25 (SVTGLAIIAVIMIVWLQFMSP), 341–361 (PFAEFIILPVFSWMNGFVSNY), 362–382 (GLIIIIFAFLIKLVTYPLSMA), 427–447 (IGGCLPVVLQMPLLFAMFYVF), 473–493 (FGFAIPMYGSHIAVFPILMAV), and 520–540 (AMMLLFFNNMPAGLGLYYLMF).

Belongs to the OXA1/ALB3/YidC family. Type 1 subfamily. In terms of assembly, interacts with the Sec translocase complex via SecD. Specifically interacts with transmembrane segments of nascent integral membrane proteins during membrane integration.

It localises to the cell inner membrane. Required for the insertion and/or proper folding and/or complex formation of integral membrane proteins into the membrane. Involved in integration of membrane proteins that insert both dependently and independently of the Sec translocase complex, as well as at least some lipoproteins. Aids folding of multispanning membrane proteins. The chain is Membrane protein insertase YidC from Pelodictyon phaeoclathratiforme (strain DSM 5477 / BU-1).